Consider the following 336-residue polypeptide: Ribose-phosphate pyrophosphokinase (336 aa).

ATP contacts are provided by residues 43–45 (DQE) and 102–103 (RQ). Mg(2+) contacts are provided by histidine 136 and aspartate 178. Residue lysine 201 is part of the active site. D-ribose 5-phosphate is bound by residues arginine 203, aspartate 227, and 231–235 (DTAGT).

This sequence belongs to the ribose-phosphate pyrophosphokinase family. Class I subfamily. Homohexamer. Requires Mg(2+) as cofactor.

The protein localises to the cytoplasm. It carries out the reaction D-ribose 5-phosphate + ATP = 5-phospho-alpha-D-ribose 1-diphosphate + AMP + H(+). It functions in the pathway metabolic intermediate biosynthesis; 5-phospho-alpha-D-ribose 1-diphosphate biosynthesis; 5-phospho-alpha-D-ribose 1-diphosphate from D-ribose 5-phosphate (route I): step 1/1. Involved in the biosynthesis of the central metabolite phospho-alpha-D-ribosyl-1-pyrophosphate (PRPP) via the transfer of pyrophosphoryl group from ATP to 1-hydroxyl of ribose-5-phosphate (Rib-5-P). In Cereibacter sphaeroides (strain KD131 / KCTC 12085) (Rhodobacter sphaeroides), this protein is Ribose-phosphate pyrophosphokinase.